The sequence spans 358 residues: GDSL esterase/lipase EXL5 (358 aa).

Positions 1-21 (MFRKKMLVLALFSIYFLSIEA) are cleaved as a signal peptide. Asn-24 is a glycosylation site (N-linked (GlcNAc...) asparagine). The active-site Nucleophile is the Ser-36. Active-site residues include Asp-333 and His-336.

The protein belongs to the 'GDSL' lipolytic enzyme family. In terms of tissue distribution, flower buds.

Its subcellular location is the secreted. In Arabidopsis thaliana (Mouse-ear cress), this protein is GDSL esterase/lipase EXL5 (EXL5).